Here is a 122-residue protein sequence, read N- to C-terminus: Large ribosomal subunit protein uL14c (122 aa).

It belongs to the universal ribosomal protein uL14 family. As to quaternary structure, part of the 50S ribosomal subunit.

It is found in the plastid. The protein localises to the chloroplast. Functionally, binds to 23S rRNA. The polypeptide is Large ribosomal subunit protein uL14c (Guizotia abyssinica (Niger)).